Consider the following 230-residue polypeptide: Large ribosomal subunit protein uL1 (230 aa).

The protein belongs to the universal ribosomal protein uL1 family. As to quaternary structure, part of the 50S ribosomal subunit.

Its function is as follows. Binds directly to 23S rRNA. The L1 stalk is quite mobile in the ribosome, and is involved in E site tRNA release. Protein L1 is also a translational repressor protein, it controls the translation of the L11 operon by binding to its mRNA. This is Large ribosomal subunit protein uL1 from Lactobacillus johnsonii (strain CNCM I-12250 / La1 / NCC 533).